Here is a 332-residue protein sequence, read N- to C-terminus: Probable electron transfer flavoprotein subunit alpha, mitochondrial (332 aa).

FAD is bound at residue 275-303 (LYIAIGISGAIQHLAGMKDSKVIVAINKD).

Belongs to the ETF alpha-subunit/FixB family. As to quaternary structure, heterodimer of an alpha and a beta subunit. Requires FAD as cofactor.

It is found in the mitochondrion matrix. In terms of biological role, the electron transfer flavoprotein serves as a specific electron acceptor for several dehydrogenases, including five acyl-CoA dehydrogenases, glutaryl-CoA and sarcosine dehydrogenase. It transfers the electrons to the main mitochondrial respiratory chain via ETF-ubiquinone oxidoreductase (ETF dehydrogenase). The chain is Probable electron transfer flavoprotein subunit alpha, mitochondrial from Caenorhabditis elegans.